Consider the following 1404-residue polypeptide: DNA-directed RNA polymerase subunit beta' (1404 aa).

Cys60, Cys62, Cys75, and Cys78 together coordinate Zn(2+). Residues Asp449, Asp451, and Asp453 each coordinate Mg(2+). Zn(2+)-binding residues include Cys778, Cys852, Cys859, and Cys862. A disordered region spans residues 1381–1404 (DRPLEEEEEEEIPQSIADDSDGDE). Residues 1384-1404 (LEEEEEEEIPQSIADDSDGDE) are compositionally biased toward acidic residues.

It belongs to the RNA polymerase beta' chain family. The RNAP catalytic core consists of 2 alpha, 1 beta, 1 beta' and 1 omega subunit. When a sigma factor is associated with the core the holoenzyme is formed, which can initiate transcription. Mg(2+) serves as cofactor. Zn(2+) is required as a cofactor.

The enzyme catalyses RNA(n) + a ribonucleoside 5'-triphosphate = RNA(n+1) + diphosphate. Its function is as follows. DNA-dependent RNA polymerase catalyzes the transcription of DNA into RNA using the four ribonucleoside triphosphates as substrates. In Leptospira borgpetersenii serovar Hardjo-bovis (strain JB197), this protein is DNA-directed RNA polymerase subunit beta'.